The primary structure comprises 423 residues: Mannose-6-phosphate isomerase (423 aa).

Ala2 is modified (N-acetylalanine). Phosphoserine occurs at positions 102 and 108. The Zn(2+) site is built by Gln110, His112, Glu137, and His276. The active site involves Arg295.

It belongs to the mannose-6-phosphate isomerase type 1 family. Zn(2+) is required as a cofactor. In terms of tissue distribution, expressed in all tissues, but more abundant in heart, brain and skeletal muscle.

The protein localises to the cytoplasm. The enzyme catalyses D-mannose 6-phosphate = D-fructose 6-phosphate. It functions in the pathway nucleotide-sugar biosynthesis; GDP-alpha-D-mannose biosynthesis; alpha-D-mannose 1-phosphate from D-fructose 6-phosphate: step 1/2. Functionally, isomerase that catalyzes the interconversion of fructose-6-P and mannose-6-P and has a critical role in the supply of D-mannose derivatives required for many eukaryotic glycosylation reactions. This is Mannose-6-phosphate isomerase from Homo sapiens (Human).